Reading from the N-terminus, the 65-residue chain is Large ribosomal subunit protein uL29 (65 aa).

It belongs to the universal ribosomal protein uL29 family.

The polypeptide is Large ribosomal subunit protein uL29 (Desulforapulum autotrophicum (strain ATCC 43914 / DSM 3382 / VKM B-1955 / HRM2) (Desulfobacterium autotrophicum)).